The primary structure comprises 211 residues: FMN-dependent NADH:quinone oxidoreductase (211 aa).

FMN is bound by residues Ser-10 and 16-18 (SVS).

The protein belongs to the azoreductase type 1 family. In terms of assembly, homodimer. FMN serves as cofactor.

It catalyses the reaction 2 a quinone + NADH + H(+) = 2 a 1,4-benzosemiquinone + NAD(+). The catalysed reaction is N,N-dimethyl-1,4-phenylenediamine + anthranilate + 2 NAD(+) = 2-(4-dimethylaminophenyl)diazenylbenzoate + 2 NADH + 2 H(+). In terms of biological role, quinone reductase that provides resistance to thiol-specific stress caused by electrophilic quinones. Functionally, also exhibits azoreductase activity. Catalyzes the reductive cleavage of the azo bond in aromatic azo compounds to the corresponding amines. This Parafrankia sp. (strain EAN1pec) protein is FMN-dependent NADH:quinone oxidoreductase.